We begin with the raw amino-acid sequence, 202 residues long: GMP synthase [glutamine-hydrolyzing] subunit A (202 aa).

The region spanning 4–194 (KIYVVDNGGQ…IAICQQHKEK (191 aa)) is the Glutamine amidotransferase type-1 domain. Residue C81 is the Nucleophile of the active site. Residues H168 and E170 contribute to the active site.

In terms of assembly, heterodimer composed of a glutamine amidotransferase subunit (A) and a GMP-binding subunit (B).

It catalyses the reaction XMP + L-glutamine + ATP + H2O = GMP + L-glutamate + AMP + diphosphate + 2 H(+). The protein operates within purine metabolism; GMP biosynthesis; GMP from XMP (L-Gln route): step 1/1. Catalyzes the synthesis of GMP from XMP. This chain is GMP synthase [glutamine-hydrolyzing] subunit A, found in Thermoplasma volcanium (strain ATCC 51530 / DSM 4299 / JCM 9571 / NBRC 15438 / GSS1).